Reading from the N-terminus, the 152-residue chain is Large ribosomal subunit protein bL9 (152 aa).

Belongs to the bacterial ribosomal protein bL9 family.

Binds to the 23S rRNA. In Streptococcus thermophilus (strain ATCC BAA-491 / LMD-9), this protein is Large ribosomal subunit protein bL9.